An 852-amino-acid chain; its full sequence is 2-deoxy-glucose resistant protein 2 (852 aa).

A compositionally biased stretch (polar residues) spans 1–18; it reads MFKSKTSTLSYDETPNSN. A disordered region spans residues 1-60; the sequence is MFKSKTSTLSYDETPNSNEGDRNATPVNPKEKSQTKHLNIPGDRSRHSSIADSKRSSSRY. 6 WD repeats span residues 171-210, 278-316, 318-358, 426-471, 476-515, and 651-689; these read LFKN…VKRS, EHAL…SLKT, VHPD…VSYA, QHGP…ELFK, GSSR…LSAE, and GFSS…EIRK. Serine 716 carries the phosphoserine modification. The disordered stretch occupies residues 723 to 748; that stretch reads DERSSTEDNEFSTTPPSNTHNSRPSH. Polar residues predominate over residues 733–744; it reads FSTTPPSNTHNS.

Belongs to the WD repeat DGR2 family.

The protein is 2-deoxy-glucose resistant protein 2 (DGR2) of Saccharomyces cerevisiae (strain ATCC 204508 / S288c) (Baker's yeast).